We begin with the raw amino-acid sequence, 513 residues long: ATP synthase subunit alpha (513 aa).

Position 169–176 (169–176 (GDRQCGKT)) interacts with ATP.

This sequence belongs to the ATPase alpha/beta chains family. In terms of assembly, F-type ATPases have 2 components, CF(1) - the catalytic core - and CF(0) - the membrane proton channel. CF(1) has five subunits: alpha(3), beta(3), gamma(1), delta(1), epsilon(1). CF(0) has three main subunits: a(1), b(2) and c(9-12). The alpha and beta chains form an alternating ring which encloses part of the gamma chain. CF(1) is attached to CF(0) by a central stalk formed by the gamma and epsilon chains, while a peripheral stalk is formed by the delta and b chains.

Its subcellular location is the cell inner membrane. It catalyses the reaction ATP + H2O + 4 H(+)(in) = ADP + phosphate + 5 H(+)(out). Functionally, produces ATP from ADP in the presence of a proton gradient across the membrane. The alpha chain is a regulatory subunit. In Alteromonas mediterranea (strain DSM 17117 / CIP 110805 / LMG 28347 / Deep ecotype), this protein is ATP synthase subunit alpha.